Consider the following 308-residue polypeptide: Ribosomal protein L11 methyltransferase (308 aa).

Residues threonine 157, glycine 178, aspartate 200, and asparagine 243 each contribute to the S-adenosyl-L-methionine site.

This sequence belongs to the methyltransferase superfamily. PrmA family.

The protein localises to the cytoplasm. It carries out the reaction L-lysyl-[protein] + 3 S-adenosyl-L-methionine = N(6),N(6),N(6)-trimethyl-L-lysyl-[protein] + 3 S-adenosyl-L-homocysteine + 3 H(+). Its function is as follows. Methylates ribosomal protein L11. The polypeptide is Ribosomal protein L11 methyltransferase (Desulforamulus reducens (strain ATCC BAA-1160 / DSM 100696 / MI-1) (Desulfotomaculum reducens)).